Here is a 349-residue protein sequence, read N- to C-terminus: DNA polymerase IV (349 aa).

Positions 3 to 187 (VLFVDFDYFF…LDISKVPGVG (185 aa)) constitute a UmuC domain. Positions 7 and 105 each coordinate Mg(2+). Glu106 is a catalytic residue.

It belongs to the DNA polymerase type-Y family. As to quaternary structure, monomer. Requires Mg(2+) as cofactor.

The protein resides in the cytoplasm. It carries out the reaction DNA(n) + a 2'-deoxyribonucleoside 5'-triphosphate = DNA(n+1) + diphosphate. Its function is as follows. Poorly processive, error-prone DNA polymerase involved in untargeted mutagenesis. Copies undamaged DNA at stalled replication forks, which arise in vivo from mismatched or misaligned primer ends. These misaligned primers can be extended by PolIV. Exhibits no 3'-5' exonuclease (proofreading) activity. May be involved in translesional synthesis. The polypeptide is DNA polymerase IV (Metallosphaera sedula (strain ATCC 51363 / DSM 5348 / JCM 9185 / NBRC 15509 / TH2)).